Consider the following 238-residue polypeptide: Fish-egg lectin (238 aa).

A run of 5 repeats spans residues 1 to 34 (LDCTVIDGNLKQIDAGSGSVVGVNNLNETFVLID), 35 to 68 (NVFTKISGSLKHFSVGPAGQLGVNTANNIFKYQS), 69 to 106 (GGFVQLAGLLKQVDAGGDQIIAGVNMYDDIYCLNMDAN), 107 to 156 (NKWP…CSGS), and 157 to 199 (GSFI…KPDG). The interval 1 to 199 (LDCTVIDGNL…TGVTRSKPDG (199 aa)) is 5 X approximate tandem repeats. Cystine bridges form between Cys-3–Cys-234, Cys-100–Cys-153, Cys-128–Cys-133, and Cys-208–Cys-226. An N-linked (GlcNAc...) asparagine glycan is attached at Asn-27.

Belongs to the tectonin family. As to expression, expressed in the eggs.

It is found in the secreted. In terms of biological role, lipopolysaccharide-binding protein with a very low agglutinating activity for human A-type erythrocytes and interacts with both Gram-positive and Gram-negative bacteria. This Cyprinus carpio (Common carp) protein is Fish-egg lectin.